A 171-amino-acid polypeptide reads, in one-letter code: Large ribosomal subunit protein uL10 (171 aa).

Belongs to the universal ribosomal protein uL10 family. As to quaternary structure, part of the ribosomal stalk of the 50S ribosomal subunit. The N-terminus interacts with L11 and the large rRNA to form the base of the stalk. The C-terminus forms an elongated spine to which L12 dimers bind in a sequential fashion forming a multimeric L10(L12)X complex.

Functionally, forms part of the ribosomal stalk, playing a central role in the interaction of the ribosome with GTP-bound translation factors. The protein is Large ribosomal subunit protein uL10 of Hyphomonas neptunium (strain ATCC 15444).